The following is a 213-amino-acid chain: Histone H1.3 (213 aa).

An N-acetylserine modification is found at S1. Residues 1-15 (SEAPAETAAPAPAEK) are compositionally biased toward low complexity. A disordered region spans residues 1–41 (SEAPAETAAPAPAEKSPAKKKKAAKKPGAGAAKRKAAGPPV). K15 carries the N6-acetyllysine modification. An N6-(beta-hydroxybutyryl)lysine mark is found at K35 and K53. Positions 37 to 110 (AGPPVSELIT…GASGSFKLDK (74 aa)) constitute an H15 domain. The residue at position 55 (R55) is a Citrulline. 3 positions are modified to N6-(beta-hydroxybutyryl)lysine: K65, K86, and K91. Residues 92–213 (GTLVETKGTG…AKKTAAKKKK (122 aa)) form a disordered region. Residue S105 is modified to Phosphoserine. K107 is subject to N6-(beta-hydroxybutyryl)lysine. The span at 107 to 119 (KLDKKAASGEAKP) shows a compositional bias: basic and acidic residues. Basic residues-rich tracts occupy residues 120–131 (KPKKAGAAKPKK), 138–170 (KKPK…KVAK), and 179–213 (KSPK…KKKK).

It belongs to the histone H1/H5 family. In terms of processing, H1 histones are progressively phosphorylated during the cell cycle, becoming maximally phosphorylated during late G2 phase and M phase, and being dephosphorylated sharply thereafter. Citrullination at Arg-55 (H1R54ci) by PADI4 takes place within the DNA-binding site of H1 and results in its displacement from chromatin and global chromatin decondensation, thereby promoting pluripotency and stem cell maintenance.

It localises to the nucleus. It is found in the chromosome. In terms of biological role, histones H1 are necessary for the condensation of nucleosome chains into higher-order structures. This is Histone H1.3 from Oryctolagus cuniculus (Rabbit).